The primary structure comprises 330 residues: Apolipoprotein E (330 aa).

A signal peptide spans 1-18 (MKVLWAALVVALLAGCWA). The segment at 21–43 (EPESPLQGKPEPELEPELEPKRE) is disordered. Repeat copies occupy residues 96 to 117 (TLMEETMKEIKAYRAELEEQLG), 118 to 139 (PMASETQARVAKELQAAQARLR), 140 to 161 (SDMEDVRTRLTQYRGEVQAMLG), 162 to 183 (QSTEELRARFASHMRKLRKRVL), 184 to 205 (RDAEDLQKRLAVYRAGVREGAE), 206 to 227 (RSVSSIRERLWPLLEQARTRHA), and 247 to 268 (GRLEEVGSRARSHLDEVREQME). Residues 96 to 268 (TLMEETMKEI…HLDEVREQME (173 aa)) form a 7 X 22 AA approximate tandem repeats region. At M159 the chain carries Methionine sulfoxide. The residue at position 163 (S163) is a Phosphoserine. Positions 174–184 (HMRKLRKRVLR) are LDL and other lipoprotein receptors binding. 178 to 181 (LRKR) contributes to the heparin binding site. The interval 226–303 (HANLATQPLR…SWFEPLVEDM (78 aa)) is lipid-binding and lipoprotein association. 242–249 (GQQLRGRL) provides a ligand contact to heparin. The tract at residues 279-330 (NQMRQQVEAFQARLKSWFEPLVEDMQRQWAGLVEKVQVAVGTSPTTPPLETK) is homooligomerization. The tract at residues 291–303 (RLKSWFEPLVEDM) is specificity for association with VLDL.

This sequence belongs to the apolipoprotein A1/A4/E family. As to quaternary structure, homotetramer. May interact with ABCA1; functionally associated with ABCA1 in the biogenesis of HDLs. May interact with APP/A4 amyloid-beta peptide; the interaction is extremely stable in vitro but its physiological significance is unclear. May interact with MAPT. May interact with MAP2. In the cerebrospinal fluid, interacts with secreted SORL1. Interacts with PMEL; this allows the loading of PMEL luminal fragment on ILVs to induce fibril nucleation. APOE exists as multiple glycosylated and sialylated glycoforms within cells and in plasma. The extent of glycosylation and sialylation are tissue and context specific. In terms of processing, glycated in plasma VLDL. Post-translationally, phosphorylated by FAM20C in the extracellular medium.

The protein resides in the secreted. It localises to the extracellular space. Its subcellular location is the extracellular matrix. The protein localises to the extracellular vesicle. It is found in the endosome. The protein resides in the multivesicular body. APOE is an apolipoprotein, a protein associating with lipid particles, that mainly functions in lipoprotein-mediated lipid transport between organs via the plasma and interstitial fluids. APOE is a core component of plasma lipoproteins and is involved in their production, conversion and clearance. Apolipoproteins are amphipathic molecules that interact both with lipids of the lipoprotein particle core and the aqueous environment of the plasma. As such, APOE associates with chylomicrons, chylomicron remnants, very low density lipoproteins (VLDL) and intermediate density lipoproteins (IDL) but shows a preferential binding to high-density lipoproteins (HDL). It also binds a wide range of cellular receptors including the LDL receptor/LDLR, the LDL receptor-related proteins LRP1, LRP2 and LRP8 and the very low-density lipoprotein receptor/VLDLR that mediate the cellular uptake of the APOE-containing lipoprotein particles. Finally, APOE also has a heparin-binding activity and binds heparan-sulfate proteoglycans on the surface of cells, a property that supports the capture and the receptor-mediated uptake of APOE-containing lipoproteins by cells. A main function of APOE is to mediate lipoprotein clearance through the uptake of chylomicrons, VLDLs, and HDLs by hepatocytes. APOE is also involved in the biosynthesis by the liver of VLDLs as well as their uptake by peripheral tissues ensuring the delivery of triglycerides and energy storage in muscle, heart and adipose tissues. By participating in the lipoprotein-mediated distribution of lipids among tissues, APOE plays a critical role in plasma and tissues lipid homeostasis. APOE is also involved in two steps of reverse cholesterol transport, the HDLs-mediated transport of cholesterol from peripheral tissues to the liver, and thereby plays an important role in cholesterol homeostasis. First, it is functionally associated with ABCA1 in the biogenesis of HDLs in tissues. Second, it is enriched in circulating HDLs and mediates their uptake by hepatocytes. APOE also plays an important role in lipid transport in the central nervous system, regulating neuron survival and sprouting. This chain is Apolipoprotein E (APOE), found in Neomonachus schauinslandi (Hawaiian monk seal).